Reading from the N-terminus, the 194-residue chain is Probable nicotinate-nucleotide adenylyltransferase (194 aa).

This sequence belongs to the NadD family.

The enzyme catalyses nicotinate beta-D-ribonucleotide + ATP + H(+) = deamido-NAD(+) + diphosphate. It participates in cofactor biosynthesis; NAD(+) biosynthesis; deamido-NAD(+) from nicotinate D-ribonucleotide: step 1/1. In terms of biological role, catalyzes the reversible adenylation of nicotinate mononucleotide (NaMN) to nicotinic acid adenine dinucleotide (NaAD). This chain is Probable nicotinate-nucleotide adenylyltransferase, found in Brucella suis biovar 1 (strain 1330).